The following is a 445-amino-acid chain: Serine--tRNA ligase (445 aa).

250–252 lines the L-serine pocket; sequence TAE. 281 to 283 contacts ATP; it reads RAE. E304 provides a ligand contact to L-serine. An ATP-binding site is contributed by 368 to 371; the sequence is EISS. L-serine is bound at residue S404.

The protein belongs to the class-II aminoacyl-tRNA synthetase family. Type-1 seryl-tRNA synthetase subfamily. Homodimer. The tRNA molecule binds across the dimer.

The protein resides in the cytoplasm. It catalyses the reaction tRNA(Ser) + L-serine + ATP = L-seryl-tRNA(Ser) + AMP + diphosphate + H(+). The enzyme catalyses tRNA(Sec) + L-serine + ATP = L-seryl-tRNA(Sec) + AMP + diphosphate + H(+). It participates in aminoacyl-tRNA biosynthesis; selenocysteinyl-tRNA(Sec) biosynthesis; L-seryl-tRNA(Sec) from L-serine and tRNA(Sec): step 1/1. In terms of biological role, catalyzes the attachment of serine to tRNA(Ser). Is also able to aminoacylate tRNA(Sec) with serine, to form the misacylated tRNA L-seryl-tRNA(Sec), which will be further converted into selenocysteinyl-tRNA(Sec). This is Serine--tRNA ligase from Azorhizobium caulinodans (strain ATCC 43989 / DSM 5975 / JCM 20966 / LMG 6465 / NBRC 14845 / NCIMB 13405 / ORS 571).